A 330-amino-acid polypeptide reads, in one-letter code: B-cell receptor CD22 (330 aa).

The signal sequence occupies residues 1-17 (MHLLGPWLLLLEYLAFS). The Ig-like V-type domain occupies 18-136 (DSSKWAFEHP…MERIHLNVSE (119 aa)). Residues 18–330 (DSSKWAFEHP…VFLQVQYAPE (313 aa)) are Extracellular-facing. 3 disulfides stabilise this stretch: cysteine 37–cysteine 165, cysteine 42–cysteine 100, and cysteine 159–cysteine 217. Residues asparagine 65, asparagine 99, and asparagine 110 are each glycosylated (N-linked (GlcNAc...) asparagine). Arginine 118 lines the N-acetylneuraminate pocket. N-linked (GlcNAc...) asparagine glycans are attached at residues asparagine 133, asparagine 162, asparagine 187, and asparagine 229. 2 Ig-like C2-type domains span residues 141 to 233 (PHIQ…DTVQ) and 240 to 324 (PKLK…VFLQ). A disulfide bond links cysteine 263 and cysteine 307.

Belongs to the immunoglobulin superfamily. SIGLEC (sialic acid binding Ig-like lectin) family. Predominantly monomer of isoform CD22-beta. Also found as heterodimer of isoform CD22-beta and a shorter isoform. Interacts with PTPN6/SHP-1, LYN, SYK, PIK3R1/PIK3R2 and PLCG1 upon phosphorylation. Interacts with GRB2, INPP5D and SHC1 upon phosphorylation. May form a complex with INPP5D/SHIP, GRB2 and SHC1.

It is found in the cell membrane. Functionally, most highly expressed siglec (sialic acid-binding immunoglobulin-like lectin) on B-cells that plays a role in various aspects of B-cell biology including differentiation, antigen presentation, and trafficking to bone marrow. Binds to alpha 2,6-linked sialic acid residues of surface molecules such as CD22 itself, CD45 and IgM in a cis configuration. Can also bind to ligands on other cells as an adhesion molecule in a trans configuration. Acts as an inhibitory coreceptor on the surface of B-cells and inhibits B-cell receptor induced signaling, characterized by inhibition of the calcium mobilization and cellular activation. Mechanistically, the immunoreceptor tyrosine-based inhibitory motif domain is phosphorylated by the Src kinase LYN, which in turn leads to the recruitment of the protein tyrosine phosphatase 1/PTPN6, leading to the negative regulation of BCR signaling. If this negative signaling from is of sufficient strength, apoptosis of the B-cell can be induced. This chain is B-cell receptor CD22, found in Pongo pygmaeus (Bornean orangutan).